The sequence spans 122 residues: Fluoride-specific ion channel FluC (122 aa).

4 helical membrane-spanning segments follow: residues Phe5–Ile25, Phe29–Leu49, Phe65–Phe85, and Phe93–Phe113. Positions 72 and 75 each coordinate Na(+).

It belongs to the fluoride channel Fluc/FEX (TC 1.A.43) family.

Its subcellular location is the cell membrane. The enzyme catalyses fluoride(in) = fluoride(out). Na(+) is not transported, but it plays an essential structural role and its presence is essential for fluoride channel function. In terms of biological role, fluoride-specific ion channel. Important for reducing fluoride concentration in the cell, thus reducing its toxicity. The protein is Fluoride-specific ion channel FluC of Methanococcus vannielii (strain ATCC 35089 / DSM 1224 / JCM 13029 / OCM 148 / SB).